Here is a 296-residue protein sequence, read N- to C-terminus: 4-hydroxy-tetrahydrodipicolinate synthase (296 aa).

Thr-49 provides a ligand contact to pyruvate. Residue Tyr-137 is the Proton donor/acceptor of the active site. Lys-166 acts as the Schiff-base intermediate with substrate in catalysis. Ile-208 is a pyruvate binding site.

The protein belongs to the DapA family. In terms of assembly, homotetramer; dimer of dimers.

It localises to the cytoplasm. It catalyses the reaction L-aspartate 4-semialdehyde + pyruvate = (2S,4S)-4-hydroxy-2,3,4,5-tetrahydrodipicolinate + H2O + H(+). Its pathway is amino-acid biosynthesis; L-lysine biosynthesis via DAP pathway; (S)-tetrahydrodipicolinate from L-aspartate: step 3/4. In terms of biological role, catalyzes the condensation of (S)-aspartate-beta-semialdehyde [(S)-ASA] and pyruvate to 4-hydroxy-tetrahydrodipicolinate (HTPA). The chain is 4-hydroxy-tetrahydrodipicolinate synthase from Chlorobium phaeobacteroides (strain DSM 266 / SMG 266 / 2430).